The following is a 969-amino-acid chain: Alanine--tRNA ligase (969 aa).

The transit peptide at 1–8 (MIKTLLRR) directs the protein to the mitochondrion. Zn(2+) is bound by residues histidine 616, histidine 620, cysteine 735, and histidine 739.

The protein belongs to the class-II aminoacyl-tRNA synthetase family. Monomer. Requires Zn(2+) as cofactor.

Its subcellular location is the mitochondrion. It is found in the cytoplasm. The catalysed reaction is tRNA(Ala) + L-alanine + ATP = L-alanyl-tRNA(Ala) + AMP + diphosphate. In terms of biological role, catalyzes the attachment of alanine to tRNA(Ala) in a two-step reaction: alanine is first activated by ATP to form Ala-AMP and then transferred to the acceptor end of tRNA(Ala). Also edits incorrectly charged tRNA(Ala) via its editing domain. In Candida albicans (strain SC5314 / ATCC MYA-2876) (Yeast), this protein is Alanine--tRNA ligase.